The chain runs to 151 residues: Arginine repressor (151 aa).

It belongs to the ArgR family.

It is found in the cytoplasm. It functions in the pathway amino-acid biosynthesis; L-arginine biosynthesis [regulation]. Functionally, regulates arginine biosynthesis genes. The chain is Arginine repressor from Lachnospira eligens (strain ATCC 27750 / DSM 3376 / VPI C15-48 / C15-B4) (Eubacterium eligens).